The sequence spans 570 residues: MSMFCYQCQEAAGGRGCTVKGVCGKTEDIAKTQDLIIYVVKGIAIYSSQVREIGLNTSEADKFIVESLFSTITNANFDAKALNARVQEGLKIRQSLKDAIIKAGGSYNSKENKSWTSKFLSVLGIKNDKDEKEIHDAAVWAANNPEDFKKKAETVGVLATENEDIRSLRELLTYGLKGMAAYLEHANNLGYDEDSIHAFMEKALVATLDDTLSADELTALVLECGKYGVDVMALLDKANTSTYGNPEITKVNIGVRNNPGILISGHDLKDMEELLKQTEGTGVDVYTHSEMLPANYYPAFKKYKHFVGNYGNAWWKQNEEFEAFNGPILMTTNCIVTPKASYKDRMYTTGVTGFEGVKHINASKDGKKDFSEIIEHAKRCSSPKEIEKGEIIGGFAHNQVLALAPQVVDAVKTGAIKRFFVMAGCDGRMKSRNYYTDFAKALPKDTVILTAGCAKYKYNKLDLGDINGIPRVLDAGQCNDSYSLAVIALKLKEVFELEDINELPISYNIAWYEQKAVIVLLALLHLGVKNIHLGPTLPAFLSPNVAKILVENFGIGTISSVDEDIKMFMN.

Cys5, Cys8, Cys17, and Cys23 together coordinate [4Fe-4S] cluster. Residues His266, Glu290, Cys334, Cys425, Cys453, Cys478, Glu513, and Lys515 each coordinate hybrid [4Fe-2O-2S] cluster. Residue Cys425 is modified to Cysteine persulfide.

Belongs to the HCP family. The cofactor is [4Fe-4S] cluster. It depends on hybrid [4Fe-2O-2S] cluster as a cofactor.

The protein resides in the cytoplasm. The catalysed reaction is A + NH4(+) + H2O = hydroxylamine + AH2 + H(+). Catalyzes the reduction of hydroxylamine to form NH(3) and H(2)O. This Clostridium botulinum (strain Okra / Type B1) protein is Hydroxylamine reductase.